The primary structure comprises 412 residues: uncharacterized protein (412 aa).

Positions 50-264 (EVDIRTAYIN…KSGRRIVIGD (215 aa)) constitute a Radical SAM core domain. 3 residues coordinate [4Fe-4S] cluster: Cys-64, Cys-68, and Cys-71.

The protein belongs to the radical SAM superfamily. Anaerobic sulfatase-maturating enzyme family. The cofactor is [4Fe-4S] cluster.

This is an uncharacterized protein from Archaeoglobus fulgidus (strain ATCC 49558 / DSM 4304 / JCM 9628 / NBRC 100126 / VC-16).